The sequence spans 310 residues: GPN-loop GTPase 2 (310 aa).

Ala-2 carries the post-translational modification N-acetylalanine. 19–24 (GSGKTT) contributes to the GTP binding site. The Gly-Pro-Asn (GPN)-loop; involved in dimer interface signature appears at 76–78 (GPN). 178–181 (SKMD) provides a ligand contact to GTP.

Belongs to the GPN-loop GTPase family. As to quaternary structure, heterodimers with GPN1 or GPN3. Binds to RNA polymerase II (RNAPII).

Functionally, small GTPase required for proper localization of RNA polymerase II and III (RNAPII and RNAPIII). May act at an RNAP assembly step prior to nuclear import. The sequence is that of GPN-loop GTPase 2 from Rattus norvegicus (Rat).